The primary structure comprises 203 residues: Small ribosomal subunit protein uS4c (203 aa).

Positions Leu18 to Lys42 are disordered. The segment covering Met33–Lys42 has biased composition (polar residues). Residues Met91–Lys152 form the S4 RNA-binding domain.

This sequence belongs to the universal ribosomal protein uS4 family. As to quaternary structure, part of the 30S ribosomal subunit. Contacts protein S5. The interaction surface between S4 and S5 is involved in control of translational fidelity.

Its subcellular location is the plastid. It localises to the chloroplast. Functionally, one of the primary rRNA binding proteins, it binds directly to 16S rRNA where it nucleates assembly of the body of the 30S subunit. With S5 and S12 plays an important role in translational accuracy. This chain is Small ribosomal subunit protein uS4c (rps4), found in Pinus koraiensis (Korean pine).